Reading from the N-terminus, the 509-residue chain is MGTGKKEATRRAKGGETGNGFGNIRVKGVNFYRDAKKVKKLSMYKEGRAKHNARGEEVQAATFQSKEIPNARIDPNRRWFGNTRVIAQDALNHFREALGETKRDSYQVLLRQNKLPMSLLEENNKIPQVKVVETESYANTFGPKAQRKKPQLAVGDFAELASAADESQQDFEAKKEEDNSWKVDGWSQEAKEAIFHKGQSKRIWNELYKVIDSSDVVIHVLDARDPLGTRCTSVEQYIKKEAPHKHLIFVLNKCDLVPTWVAAAWVKHLSQDYPTLAFHASITNSFGKGSLIQLLRQYSALHPDRQQISVGFIGYPNTGKSSIINTLRKKKVCKTAPIPGETKVWQYITLMKRIFLIDCPGIVPPSQKDSETDILFRGVVRVEHVSYPEQYIPALLERCETKHLERTYEVSGWSNATEFLEKIARKHGRLLKGGEPDESGIAKLILNDFNRGKIPWFVPPPQAEDMENVKFAAGEGRLGEMKKREIHEAPAATETAEETKEEEFKGFDD.

A compositionally biased stretch (basic and acidic residues) spans 1–14; it reads MGTGKKEATRRAKG. The segment at 1–22 is disordered; sequence MGTGKKEATRRAKGGETGNGFG. Residues 204–365 form the CP-type G domain; sequence WNELYKVIDS…LIDCPGIVPP (162 aa). GTP is bound by residues 314-321 and 358-362; these read GYPNTGKS and DCPGI. Residues 480 to 509 are disordered; sequence EMKKREIHEAPAATETAEETKEEEFKGFDD.

It belongs to the TRAFAC class YlqF/YawG GTPase family. NOG2 subfamily.

Its subcellular location is the nucleus. The protein resides in the nucleolus. Its function is as follows. GTPase that associates with pre-60S ribosomal subunits in the nucleolus and is required for their nuclear export and maturation. In Yarrowia lipolytica (strain CLIB 122 / E 150) (Yeast), this protein is Nucleolar GTP-binding protein 2 (NOG2).